We begin with the raw amino-acid sequence, 235 residues long: Isoprenyl transferase (235 aa).

D21 is an active-site residue. Residue D21 participates in Mg(2+) binding. Residues 22–25, W26, K34, H38, and 66–68 each bind substrate; these read GNAR and SSE. N69 serves as the catalytic Proton acceptor. Substrate contacts are provided by residues W70, R72, R183, and 189–191; that span reads RIS. E202 contributes to the Mg(2+) binding site.

Belongs to the UPP synthase family. In terms of assembly, homodimer. The cofactor is Mg(2+).

In terms of biological role, catalyzes the condensation of isopentenyl diphosphate (IPP) with allylic pyrophosphates generating different type of terpenoids. This Rickettsia felis (strain ATCC VR-1525 / URRWXCal2) (Rickettsia azadi) protein is Isoprenyl transferase.